A 679-amino-acid chain; its full sequence is Transmembrane protein 214-B (679 aa).

Residues 1–94 (MASGAPDGKW…KKKPQSGDSV (94 aa)) are disordered. Positions 18 to 30 (KSGERREGERKAL) are enriched in basic and acidic residues. Asn-70, Asn-298, and Asn-322 each carry an N-linked (GlcNAc...) asparagine glycan. A run of 2 helical transmembrane segments spans residues 468-488 (GGFP…GSVL) and 606-626 (LLLH…EAAV).

The protein belongs to the TMEM214 family. Constitutively interacts with CASP4; required for the localization of procaspase 4 to the ER.

The protein resides in the endoplasmic reticulum membrane. Functionally, critical mediator, in cooperation with CASP4, of endoplasmic reticulum-stress induced apoptosis. Required or the activation of CASP4 following endoplasmic reticulum stress. In Xenopus laevis (African clawed frog), this protein is Transmembrane protein 214-B (tmem214-b).